A 184-amino-acid chain; its full sequence is NADH-quinone oxidoreductase subunit B 1 (184 aa).

Residues cysteine 37, cysteine 38, cysteine 103, and cysteine 132 each coordinate [4Fe-4S] cluster.

Belongs to the complex I 20 kDa subunit family. NDH-1 is composed of 14 different subunits. Subunits NuoB, C, D, E, F, and G constitute the peripheral sector of the complex. Requires [4Fe-4S] cluster as cofactor.

The protein resides in the cell membrane. The enzyme catalyses a quinone + NADH + 5 H(+)(in) = a quinol + NAD(+) + 4 H(+)(out). In terms of biological role, NDH-1 shuttles electrons from NADH, via FMN and iron-sulfur (Fe-S) centers, to quinones in the respiratory chain. The immediate electron acceptor for the enzyme in this species is believed to be a menaquinone. Couples the redox reaction to proton translocation (for every two electrons transferred, four hydrogen ions are translocated across the cytoplasmic membrane), and thus conserves the redox energy in a proton gradient. The polypeptide is NADH-quinone oxidoreductase subunit B 1 (Streptomyces coelicolor (strain ATCC BAA-471 / A3(2) / M145)).